A 444-amino-acid chain; its full sequence is Tubulin beta chain (444 aa).

The MREI motif motif lies at 1–4; sequence MREI. GTP-binding residues include Gln11, Glu69, Ser138, Gly142, Thr143, Gly144, Asn204, and Asn226. A Mg(2+)-binding site is contributed by Glu69. The interval 421 to 444 is disordered; that stretch reads EYQQYQDATAEEEEDFNEEAEEEA. Residues 429 to 444 are compositionally biased toward acidic residues; sequence TAEEEEDFNEEAEEEA. Residue Glu438 is modified to 5-glutamyl polyglutamate.

It belongs to the tubulin family. As to quaternary structure, dimer of alpha and beta chains. A typical microtubule is a hollow water-filled tube with an outer diameter of 25 nm and an inner diameter of 15 nM. Alpha-beta heterodimers associate head-to-tail to form protofilaments running lengthwise along the microtubule wall with the beta-tubulin subunit facing the microtubule plus end conferring a structural polarity. Microtubules usually have 13 protofilaments but different protofilament numbers can be found in some organisms and specialized cells. The cofactor is Mg(2+). Post-translationally, some glutamate residues at the C-terminus are polyglycylated, resulting in polyglycine chains on the gamma-carboxyl group. Glycylation is mainly limited to tubulin incorporated into axonemes (cilia and flagella) whereas glutamylation is prevalent in neuronal cells, centrioles, axonemes, and the mitotic spindle. Both modifications can coexist on the same protein on adjacent residues, and lowering polyglycylation levels increases polyglutamylation, and reciprocally. The precise function of polyglycylation is still unclear. Some glutamate residues at the C-terminus are polyglutamylated, resulting in polyglutamate chains on the gamma-carboxyl group. Polyglutamylation plays a key role in microtubule severing by spastin (SPAST). SPAST preferentially recognizes and acts on microtubules decorated with short polyglutamate tails: severing activity by SPAST increases as the number of glutamates per tubulin rises from one to eight, but decreases beyond this glutamylation threshold.

It is found in the cytoplasm. The protein resides in the cytoskeleton. Its function is as follows. Tubulin is the major constituent of microtubules, a cylinder consisting of laterally associated linear protofilaments composed of alpha- and beta-tubulin heterodimers. Microtubules grow by the addition of GTP-tubulin dimers to the microtubule end, where a stabilizing cap forms. Below the cap, tubulin dimers are in GDP-bound state, owing to GTPase activity of alpha-tubulin. In Xenopus laevis (African clawed frog), this protein is Tubulin beta chain (tubb).